A 361-amino-acid polypeptide reads, in one-letter code: 3-dehydroquinate synthase (361 aa).

Residues 72 to 77 (SGEKEK), 130 to 131 (TT), Lys142, and Lys151 each bind NAD(+). Positions 184, 247, and 264 each coordinate Zn(2+).

This sequence belongs to the sugar phosphate cyclases superfamily. Dehydroquinate synthase family. It depends on Co(2+) as a cofactor. Zn(2+) serves as cofactor. Requires NAD(+) as cofactor.

It is found in the cytoplasm. It catalyses the reaction 7-phospho-2-dehydro-3-deoxy-D-arabino-heptonate = 3-dehydroquinate + phosphate. The protein operates within metabolic intermediate biosynthesis; chorismate biosynthesis; chorismate from D-erythrose 4-phosphate and phosphoenolpyruvate: step 2/7. Functionally, catalyzes the conversion of 3-deoxy-D-arabino-heptulosonate 7-phosphate (DAHP) to dehydroquinate (DHQ). This is 3-dehydroquinate synthase from Bacillus cereus (strain AH820).